The following is a 155-amino-acid chain: Photosystem I reaction center subunit XI (155 aa).

Helical transmembrane passes span 80–102 (LISG…LVSF) and 117–139 (GWSQ…AFFL).

The protein belongs to the PsaL family.

The protein localises to the cellular thylakoid membrane. The protein is Photosystem I reaction center subunit XI of Thermosynechococcus vestitus (strain NIES-2133 / IAM M-273 / BP-1).